We begin with the raw amino-acid sequence, 185 residues long: Elongation factor P (185 aa).

It belongs to the elongation factor P family.

The protein resides in the cytoplasm. It functions in the pathway protein biosynthesis; polypeptide chain elongation. Involved in peptide bond synthesis. Stimulates efficient translation and peptide-bond synthesis on native or reconstituted 70S ribosomes in vitro. Probably functions indirectly by altering the affinity of the ribosome for aminoacyl-tRNA, thus increasing their reactivity as acceptors for peptidyl transferase. In Bordetella avium (strain 197N), this protein is Elongation factor P.